A 480-amino-acid chain; its full sequence is Vacuolar amino acid transporter 2 (480 aa).

The tract at residues 21-48 (LTNFPFPGTTDNDSDDGSQGQNSLNIIT) is disordered. Polar residues predominate over residues 37–46 (GSQGQNSLNI). Transmembrane regions (helical) follow at residues 72–92 (AFMNLANSILGAGIITQPFAI), 95–115 (AGILGGLLSYVALGFIVDWTL), 145–165 (LILFTNGLFAFGGCIGYCIII), 214–234 (LSKASFLAVISMIIIVLTVVI), 263–283 (LSVISFALVCHHNTSFIFFSM), 297–317 (ISIIISVICCALMGYSGFAVF), 338–358 (IARLCFGFNMLTTFPMEIFVL), 394–414 (VFITMGISLTTCNLGALFELI), and 447–467 (FYLCICFGFMIMIISSTQTII).

It belongs to the amino acid/polyamine transporter 2 family.

The protein resides in the vacuole membrane. Probable amino acid transporter of unknown specificity. This is Vacuolar amino acid transporter 2 (AVT2) from Saccharomyces cerevisiae (strain ATCC 204508 / S288c) (Baker's yeast).